A 57-amino-acid polypeptide reads, in one-letter code: UPF0391 membrane protein Nwi_2359 (57 aa).

2 consecutive transmembrane segments (helical) span residues 4–24 (WVVT…GGIA) and 30–50 (IAKI…VVGF).

This sequence belongs to the UPF0391 family.

The protein resides in the cell membrane. The sequence is that of UPF0391 membrane protein Nwi_2359 from Nitrobacter winogradskyi (strain ATCC 25391 / DSM 10237 / CIP 104748 / NCIMB 11846 / Nb-255).